We begin with the raw amino-acid sequence, 360 residues long: uncharacterized protein (360 aa).

The next 6 helical transmembrane spans lie at isoleucine 12 to isoleucine 32, valine 52 to valine 72, isoleucine 96 to isoleucine 116, isoleucine 278 to tyrosine 298, phenylalanine 306 to leucine 326, and phenylalanine 336 to valine 356.

It localises to the cell membrane. This is an uncharacterized protein from Rickettsia prowazekii (strain Madrid E).